The chain runs to 155 residues: Deoxyuridine 5'-triphosphate nucleotidohydrolase (155 aa).

Substrate-binding positions include 72-74 (RSG), Asn-85, 89-91 (TVD), and Lys-99.

It belongs to the dUTPase family. Requires Mg(2+) as cofactor.

The catalysed reaction is dUTP + H2O = dUMP + diphosphate + H(+). Its pathway is pyrimidine metabolism; dUMP biosynthesis; dUMP from dCTP (dUTP route): step 2/2. This enzyme is involved in nucleotide metabolism: it produces dUMP, the immediate precursor of thymidine nucleotides and it decreases the intracellular concentration of dUTP so that uracil cannot be incorporated into DNA. This is Deoxyuridine 5'-triphosphate nucleotidohydrolase from Parvibaculum lavamentivorans (strain DS-1 / DSM 13023 / NCIMB 13966).